Reading from the N-terminus, the 167-residue chain is SsrA-binding protein (167 aa).

Positions 139 to 158 (QNHDKRDAAKERDWQRDKQR) are enriched in basic and acidic residues. The tract at residues 139–167 (QNHDKRDAAKERDWQRDKQRVMRRHNRDA) is disordered.

It belongs to the SmpB family.

It localises to the cytoplasm. Its function is as follows. Required for rescue of stalled ribosomes mediated by trans-translation. Binds to transfer-messenger RNA (tmRNA), required for stable association of tmRNA with ribosomes. tmRNA and SmpB together mimic tRNA shape, replacing the anticodon stem-loop with SmpB. tmRNA is encoded by the ssrA gene; the 2 termini fold to resemble tRNA(Ala) and it encodes a 'tag peptide', a short internal open reading frame. During trans-translation Ala-aminoacylated tmRNA acts like a tRNA, entering the A-site of stalled ribosomes, displacing the stalled mRNA. The ribosome then switches to translate the ORF on the tmRNA; the nascent peptide is terminated with the 'tag peptide' encoded by the tmRNA and targeted for degradation. The ribosome is freed to recommence translation, which seems to be the essential function of trans-translation. The sequence is that of SsrA-binding protein from Xanthomonas oryzae pv. oryzae (strain PXO99A).